Consider the following 246-residue polypeptide: Aquaporin SIP1-1 (246 aa).

Transmembrane regions (helical) follow at residues 13–33 (AAVT…TAAV) and 45–65 (YALL…NLLC). The NPA 1 motif lies at 74–76 (NPT). 3 consecutive transmembrane segments (helical) span residues 95-115 (FPLA…AMAI), 139-159 (GAAA…WIIV), and 166-186 (IVKT…GAAY). The NPA 2 signature appears at 192-194 (NPA). The helical transmembrane segment at 214 to 234 (VYWICPFVGAVLAAWVFRAVF) threads the bilayer.

It belongs to the MIP/aquaporin (TC 1.A.8) family. SIP (TC 1.A.8.10) subfamily. Expressed in roots, leaves and anthers.

It is found in the membrane. Aquaporins facilitate the transport of water and small neutral solutes across cell membranes. The sequence is that of Aquaporin SIP1-1 (SIP1-1) from Oryza sativa subsp. japonica (Rice).